A 65-amino-acid polypeptide reads, in one-letter code: Conotoxin Bu19 (65 aa).

Positions 1–21 are cleaved as a signal peptide; the sequence is MGMRMVFTVFLLVVLATTVVS. The propeptide occupies 22–48; that stretch reads FTSDRASDGRNAAANDKASDLAALAVR. 2 disulfides stabilise this stretch: Cys-50–Cys-56 and Cys-51–Cys-64. Cys-64 is modified (cysteine amide).

It belongs to the conotoxin A superfamily. Expressed by the venom duct.

It localises to the secreted. The sequence is that of Conotoxin Bu19 from Conus bullatus (Bubble cone).